A 75-amino-acid polypeptide reads, in one-letter code: Brevinin-2SN1 (75 aa).

The signal sequence occupies residues Met1–Cys22. A propeptide spans Glu23–Glu40 (removed in mature form). Residues Cys69 and Cys75 are joined by a disulfide bond.

It belongs to the frog skin active peptide (FSAP) family. Brevinin subfamily. Expressed by the skin glands.

It localises to the secreted. In terms of biological role, antimicrobial peptide. Active against some Gram-negative and a variety of Gram-positive bacterial strains. Active against fungus C.glabrata 090902 but not against C.albicans ATCC 10231. Shows hemolytic activity against human erythrocytes. The protein is Brevinin-2SN1 of Sylvirana spinulosa (Fine-spined frog).